Here is a 211-residue protein sequence, read N- to C-terminus: Acyl-homoserine-lactone synthase (211 aa).

Belongs to the autoinducer synthase family.

It catalyses the reaction a fatty acyl-[ACP] + S-adenosyl-L-methionine = an N-acyl-L-homoserine lactone + S-methyl-5'-thioadenosine + holo-[ACP] + H(+). Its function is as follows. Required for the synthesis of OHHL (N-(3-oxohexanoyl)-L-homoserine lactone), an autoinducer molecule which binds to TraR and thus acts in the control of conjugal transfer. The chain is Acyl-homoserine-lactone synthase (traI) from Agrobacterium fabrum (strain C58 / ATCC 33970) (Agrobacterium tumefaciens (strain C58)).